The primary structure comprises 200 residues: ATP-dependent Clp protease proteolytic subunit (200 aa).

Serine 102 functions as the Nucleophile in the catalytic mechanism. Histidine 127 is a catalytic residue.

Belongs to the peptidase S14 family. Fourteen ClpP subunits assemble into 2 heptameric rings which stack back to back to give a disk-like structure with a central cavity, resembling the structure of eukaryotic proteasomes.

The protein localises to the cytoplasm. The catalysed reaction is Hydrolysis of proteins to small peptides in the presence of ATP and magnesium. alpha-casein is the usual test substrate. In the absence of ATP, only oligopeptides shorter than five residues are hydrolyzed (such as succinyl-Leu-Tyr-|-NHMec, and Leu-Tyr-Leu-|-Tyr-Trp, in which cleavage of the -Tyr-|-Leu- and -Tyr-|-Trp bonds also occurs).. Functionally, cleaves peptides in various proteins in a process that requires ATP hydrolysis. Has a chymotrypsin-like activity. Plays a major role in the degradation of misfolded proteins. The polypeptide is ATP-dependent Clp protease proteolytic subunit (Dehalococcoides mccartyi (strain ATCC BAA-2266 / KCTC 15142 / 195) (Dehalococcoides ethenogenes (strain 195))).